The sequence spans 473 residues: Sucrose-6-phosphate hydrolase (473 aa).

Substrate-binding positions include 44-47 (LLND), Q63, 106-107 (YS), 167-168 (RD), and E224. Residue D47 is part of the active site.

This sequence belongs to the glycosyl hydrolase 32 family.

The protein localises to the cytoplasm. The catalysed reaction is Hydrolysis of terminal non-reducing beta-D-fructofuranoside residues in beta-D-fructofuranosides.. Its pathway is glycan biosynthesis; sucrose metabolism. This is Sucrose-6-phosphate hydrolase (scrB) from Lactococcus lactis subsp. lactis (Streptococcus lactis).